A 267-amino-acid polypeptide reads, in one-letter code: Coiled-coil domain-containing protein 90B, mitochondrial (267 aa).

Residues 1 to 47 constitute a mitochondrion transit peptide; it reads MKGSQLYRHLSLQGNRLHLHLFQGKKLQLHPSQGHKGTAHRTWKKGF. The stretch at 142–175 forms a coiled coil; it reads LEKSEFATLRAENEKMKIELEHVRQHLLNETNRI. Residues 244–266 traverse the membrane as a helical segment; that stretch reads TVRYMAASVFTCLAIALGFYRLW.

It belongs to the CCDC90 family.

The protein resides in the mitochondrion membrane. This chain is Coiled-coil domain-containing protein 90B, mitochondrial (ccdc90b), found in Xenopus tropicalis (Western clawed frog).